The chain runs to 269 residues: Formamidopyrimidine-DNA glycosylase (269 aa).

The active-site Schiff-base intermediate with DNA is P2. Catalysis depends on E3, which acts as the Proton donor. Catalysis depends on K57, which acts as the Proton donor; for beta-elimination activity. DNA contacts are provided by H90, R109, and K150. Residues 235–269 (QVYGREGEPCRVCGTPILAGKHAQRRTYWCRRCQK) form an FPG-type zinc finger. The Proton donor; for delta-elimination activity role is filled by R259.

The protein belongs to the FPG family. Monomer. The cofactor is Zn(2+).

The catalysed reaction is Hydrolysis of DNA containing ring-opened 7-methylguanine residues, releasing 2,6-diamino-4-hydroxy-5-(N-methyl)formamidopyrimidine.. It carries out the reaction 2'-deoxyribonucleotide-(2'-deoxyribose 5'-phosphate)-2'-deoxyribonucleotide-DNA = a 3'-end 2'-deoxyribonucleotide-(2,3-dehydro-2,3-deoxyribose 5'-phosphate)-DNA + a 5'-end 5'-phospho-2'-deoxyribonucleoside-DNA + H(+). Functionally, involved in base excision repair of DNA damaged by oxidation or by mutagenic agents. Acts as a DNA glycosylase that recognizes and removes damaged bases. Has a preference for oxidized purines, such as 7,8-dihydro-8-oxoguanine (8-oxoG). Has AP (apurinic/apyrimidinic) lyase activity and introduces nicks in the DNA strand. Cleaves the DNA backbone by beta-delta elimination to generate a single-strand break at the site of the removed base with both 3'- and 5'-phosphates. In Cronobacter sakazakii (strain ATCC BAA-894) (Enterobacter sakazakii), this protein is Formamidopyrimidine-DNA glycosylase.